Here is a 135-residue protein sequence, read N- to C-terminus: Small ribosomal subunit protein uS12 (135 aa).

At aspartate 89 the chain carries 3-methylthioaspartic acid. A disordered region spans residues 108–135 (NKRTVSRSKYGTKKAKATDKKATDNKKK). Over residues 111 to 122 (TVSRSKYGTKKA) the composition is skewed to basic residues. Residues 123-135 (KATDKKATDNKKK) show a composition bias toward basic and acidic residues.

The protein belongs to the universal ribosomal protein uS12 family. Part of the 30S ribosomal subunit. Contacts proteins S8 and S17. May interact with IF1 in the 30S initiation complex.

In terms of biological role, with S4 and S5 plays an important role in translational accuracy. Interacts with and stabilizes bases of the 16S rRNA that are involved in tRNA selection in the A site and with the mRNA backbone. Located at the interface of the 30S and 50S subunits, it traverses the body of the 30S subunit contacting proteins on the other side and probably holding the rRNA structure together. The combined cluster of proteins S8, S12 and S17 appears to hold together the shoulder and platform of the 30S subunit. The chain is Small ribosomal subunit protein uS12 from Helicobacter pylori (strain P12).